The primary structure comprises 234 residues: Thymidine kinase, cytosolic (234 aa).

The residue at position 2 (Ser2) is an N-acetylserine. Phosphoserine occurs at positions 2 and 13. Residues Gly26–Ser33, Asp58–Arg60, and Asp97–Gln100 each bind ATP. The active-site Proton acceptor is the Glu98. A substrate-binding site is contributed by Phe128. Zn(2+) contacts are provided by Cys153 and Cys156. Substrate is bound by residues Val172–Gly176 and Tyr181. 2 residues coordinate Zn(2+): Cys185 and Cys188. Positions Lys203–Asn205 match the KEN box motif. Ser231 bears the Phosphoserine mark.

Belongs to the thymidine kinase family. Homotetramer. Tetramerization from dimerization is induced by ATP and increases catalytic efficiency due to a high affinity for thymidine. Tetramerization is inhibited by phosphorylation at Ser-13. Interacts (via the KEN box) with FZR1. In terms of processing, phosphorylated on Ser-13 in mitosis. Phosphorylation of Ser-13 by CDK1 during mitosis reduces homotetramerization and catalytic efficiency when DNA replication is complete and intracellular TK1 is still present at a high level. Post-translationally, polyubiquitinated. Postmitosis, ubiquitination leads to proteasomal degradation. The KEN box sequence located at the C-terminal region targets for degradation by the anaphase promoting complex (APC/C) activated and rate-limited by FZR1.

The protein resides in the cytoplasm. It carries out the reaction thymidine + ATP = dTMP + ADP + H(+). Functionally, cell-cycle-regulated enzyme of importance in nucleotide metabolism. Catalyzes the first enzymatic step in the salvage pathway converting thymidine into thymidine monophosphate. Transcriptional regulation limits expression to the S phase of the cell cycle and transient expression coincides with the oscillation in the intracellular dTTP concentration. Also important for the activation of anticancer and antiviral nucleoside analog prodrugs such as 1-b-d-arabinofuranosylcytosine (AraC) and 3c-azido-3c-deoxythymidine (AZT). This chain is Thymidine kinase, cytosolic, found in Homo sapiens (Human).